Reading from the N-terminus, the 370-residue chain is Phospho-2-dehydro-3-deoxyheptonate aldolase, tyrosine-inhibited (370 aa).

Position 2 is an N-acetylserine (serine 2).

The protein belongs to the class-I DAHP synthase family.

The enzyme catalyses D-erythrose 4-phosphate + phosphoenolpyruvate + H2O = 7-phospho-2-dehydro-3-deoxy-D-arabino-heptonate + phosphate. The protein operates within metabolic intermediate biosynthesis; chorismate biosynthesis; chorismate from D-erythrose 4-phosphate and phosphoenolpyruvate: step 1/7. Inhibited by tyrosine. Its function is as follows. Stereospecific condensation of phosphoenolpyruvate (PEP) and D-erythrose-4-phosphate (E4P) giving rise to 3-deoxy-D-arabino-heptulosonate-7-phosphate (DAHP). In Saccharomyces cerevisiae (strain ATCC 204508 / S288c) (Baker's yeast), this protein is Phospho-2-dehydro-3-deoxyheptonate aldolase, tyrosine-inhibited (ARO4).